We begin with the raw amino-acid sequence, 518 residues long: Serine/threonine-protein kinase PRR1 (518 aa).

The residue at position 1 (Met1) is an N-acetylmethionine. Positions 1–12 (MDEYSSIYSQPK) are enriched in polar residues. Positions 1-59 (MDEYSSIYSQPKTPRLKQEGFPDSIGDQHEKALIDENGEEDKKMASTEGTTGDSRSTPL) are disordered. Over residues 16 to 45 (LKQEGFPDSIGDQHEKALIDENGEEDKKMA) the composition is skewed to basic and acidic residues. Residues 47 to 59 (TEGTTGDSRSTPL) are compositionally biased toward polar residues. At Ser132 the chain carries Phosphoserine. Positions 192–508 (WKKVRPIGSG…INEIYESPFV (317 aa)) constitute a Protein kinase domain. ATP is bound by residues 198–206 (IGSGNFSTV) and Lys225. Asp354 functions as the Proton acceptor in the catalytic mechanism.

Belongs to the protein kinase superfamily. CAMK Ser/Thr protein kinase family. NIM1 subfamily.

The protein localises to the cytoplasm. The catalysed reaction is L-seryl-[protein] + ATP = O-phospho-L-seryl-[protein] + ADP + H(+). It catalyses the reaction L-threonyl-[protein] + ATP = O-phospho-L-threonyl-[protein] + ADP + H(+). Protein kinase that functions as a regulator in the pheromone-induced mating pathway downstream of mitogen-activated protein kinase (MAPK) FUS3. Diminishes transcriptional induction of genes in response to pheromone signaling. This Saccharomyces cerevisiae (strain ATCC 204508 / S288c) (Baker's yeast) protein is Serine/threonine-protein kinase PRR1 (PRR1).